Consider the following 245-residue polypeptide: uncharacterized protein (245 aa).

This is an uncharacterized protein from Dictyostelium discoideum (Social amoeba).